We begin with the raw amino-acid sequence, 226 residues long: PKHD-type hydroxylase Sfri_0612 (226 aa).

Residues lysine 77–serine 177 form the Fe2OG dioxygenase domain. Positions 95, 97, and 158 each coordinate Fe cation. Arginine 168 lines the 2-oxoglutarate pocket.

The cofactor is Fe(2+). L-ascorbate is required as a cofactor.

The protein is PKHD-type hydroxylase Sfri_0612 of Shewanella frigidimarina (strain NCIMB 400).